Here is a 236-residue protein sequence, read N- to C-terminus: UPF0280 protein Mlab_0453 (236 aa).

It belongs to the UPF0280 family.

The polypeptide is UPF0280 protein Mlab_0453 (Methanocorpusculum labreanum (strain ATCC 43576 / DSM 4855 / Z)).